The sequence spans 408 residues: Tryptophan synthase beta chain (408 aa).

Lys90 is subject to N6-(pyridoxal phosphate)lysine.

This sequence belongs to the TrpB family. Tetramer of two alpha and two beta chains. Pyridoxal 5'-phosphate is required as a cofactor.

It catalyses the reaction (1S,2R)-1-C-(indol-3-yl)glycerol 3-phosphate + L-serine = D-glyceraldehyde 3-phosphate + L-tryptophan + H2O. It functions in the pathway amino-acid biosynthesis; L-tryptophan biosynthesis; L-tryptophan from chorismate: step 5/5. In terms of biological role, the beta subunit is responsible for the synthesis of L-tryptophan from indole and L-serine. This chain is Tryptophan synthase beta chain, found in Bacillus licheniformis (strain ATCC 14580 / DSM 13 / JCM 2505 / CCUG 7422 / NBRC 12200 / NCIMB 9375 / NCTC 10341 / NRRL NRS-1264 / Gibson 46).